Consider the following 269-residue polypeptide: HTH-type transcriptional regulator Rv0792c (269 aa).

Positions 20–88 (VPASTQLAEA…QGLGTFVADP (69 aa)) constitute an HTH gntR-type domain. The segment at residues 48-67 (ERELIDRSGLSRVTVRAAVG) is a DNA-binding region (H-T-H motif).

Homodimer.

With respect to regulation, DNA-binding activity is increased in the presence of L-arabinose and inhibited by the small molecule I-OMe-Tyrphostin. In terms of biological role, transcriptional regulator required for survival in oxidative stress and for establishing infection in host tissues. Regulates the expression of a subset of genes involved in oxidative stress adaptation and virulence, enabling the bacteria to adapt and persist in host tissues. The polypeptide is HTH-type transcriptional regulator Rv0792c (Mycobacterium tuberculosis (strain ATCC 25618 / H37Rv)).